The chain runs to 326 residues: GTP 3',8-cyclase (326 aa).

Positions 4–227 (KHERNINYMR…LTPQKNILGN (224 aa)) constitute a Radical SAM core domain. Arg13 lines the GTP pocket. The [4Fe-4S] cluster site is built by Cys20 and Cys24. S-adenosyl-L-methionine is bound at residue Tyr26. Residue Cys27 participates in [4Fe-4S] cluster binding. Residue Arg63 participates in GTP binding. Position 67 (Gly67) interacts with S-adenosyl-L-methionine. Position 94 (Thr94) interacts with GTP. Position 118 (Ser118) interacts with S-adenosyl-L-methionine. Lys155 contributes to the GTP binding site. Met189 is an S-adenosyl-L-methionine binding site. Residues Cys253 and Cys256 each coordinate [4Fe-4S] cluster. A GTP-binding site is contributed by 258–260 (RIR). Cys270 is a binding site for [4Fe-4S] cluster.

Belongs to the radical SAM superfamily. MoaA family. Monomer and homodimer. It depends on [4Fe-4S] cluster as a cofactor.

It catalyses the reaction GTP + AH2 + S-adenosyl-L-methionine = (8S)-3',8-cyclo-7,8-dihydroguanosine 5'-triphosphate + 5'-deoxyadenosine + L-methionine + A + H(+). The protein operates within cofactor biosynthesis; molybdopterin biosynthesis. Functionally, catalyzes the cyclization of GTP to (8S)-3',8-cyclo-7,8-dihydroguanosine 5'-triphosphate. The chain is GTP 3',8-cyclase from Syntrophomonas wolfei subsp. wolfei (strain DSM 2245B / Goettingen).